Reading from the N-terminus, the 1977-residue chain is MAARSAPSCHLRLEWVYGYRGHQCRNNLYYTAAKEIVYFVAGVGVVYSPREHRQKFYRGHSDDIISLALHPERVLVATGQVGKEPYICVWDSYTVQTVSVLKDVHTHGIACLAFDLDGQRLVSVGLDSKNAVCVWDWKRGKMLSMAPGHTDRIFDISWDLYQPNKLVSCGVKHIKFWSLCGNALTPKRGVFGKTGDLQTILCLACARDELTYSGALNGDIYVWKGINLIRTIQGAHTAGIFSMNACEEGFATGGRDGCIRLWDLTFKPITVIDLRETEQGYKGLSVRSVCWRGDHILVGTQDSEIFEIVVHERNKPFLIMQGHCEGELWALAVHPTKPLAVTGSDDRSVRIWSLVDHALIARCNMDEPIRCAAVNADGVHLALGMKDGSLTVLRVRDMTEVVHIKDRKEAIHELKYSPDGTYLAVGCNDSSVDIYGVAQRYKKVGECVGSLSFITHLDWSSDSKYLQTNDGSGKRLLYKMPGGKEVTSKEEVKGMHWASWTCVAGLEVNGIWPKYSDINDINSVDGNYVGQVLVTADDYGVVKLFRYPCLRKGAKFRKYIGHSAHVTNVRWSHDYQWVISIGGADHSVFQWKFIPERKLKDALHIAPQESLTESNSDESDSDLSDVPELDSEIEQETQLTYHRQVYKEDLPQLKEQCKEKQKSATSKRRERAPGNSIRLHFIHGYRGYDCRSNLFYTQIGEIVYHVAAVGVIYNRQQNTQRFYLGHDDDILCLAIHPLKDYVATGQVGRDPSIHVWDTETIKPLSILKGYHQYGICAVDFSADGKRLASVGIDDSHTIVLWDWKKGEKLSVARGSKDKIFVVKMNPYVPDKLITAGIKHMKFWRRAGGGLIGRKGYVGTLGKNDTMMCAVYGWTEEMAFSGTSTGDVCIWRDVFLVKTVKAHDGPVFSMHALEKGFVTGGKDGVVALWDDSFERCLKTYAIKRADLAPGSKGLLLEDNPSIRAISLGHGHILVGTKNGEILEVDKSGPVTLLVQGHMEGEVWGLATHPYLPICATVSDDKTLRIWDLSPSHCMLAVRKLKKGGRCCCFSPDGKALAVGLNDGSFLMANADTLEDLVSFHHRKDVISDIQFSPGSGKYLAVASHDSFVDIYNVTSSKRVGVCKGATSYITHIDWDSRGKLLQVNTGAKEQLFFEAPRGKKQTIPSVEVEKISWATWTSVLGLCCEGIWPIIGEVTDVTASCLTSDKMVLATGDDLGFVKLFRYPAKGKFGKFKKYVAHSTHVTNVRWTYDDSMLVTLGGADMSLMVWTSEVERHREKKNCDSEESDTDSEEDGGYDSDVTRENEISYTIRALSTNIRPMFGVKPHLQQKEPSVDERQGVVRGSRPPVSRAPPQPEKLQSNNVGKKKRPIEDLVLELAFGYRGRDCRNNVHYLNDGDDIIYHTASVGILHNVATGTQSFYQEHNDDILCLTVNQHPKFINIVATGQVGDSADMSATAPSVHIWDAVNKQTLSILRCSHSKGVCSVSFSATGKLLLSVGLDPEHTVTIWRWQEGAKIASRGGHNQRIFVAEFRPDSDTQFVSVGIKHVKFWTLAGRALLSKKGLLSTLEDARMQTMLAVAFGANNLTFTGTISGDVCVWKDHILCRVVARAHNGPVFAMYTTLRDGLIVTGGKERPSKEGGAVKLWDQELRRCRAFRLETGQVTDCVRSVCRGKGKILVGTRNSEIIEVGEKNAACNILVNGHVDGPIWGLATHPSRDFFLSAAEDGTVRLWDIADKKMLNKVNLGHAARTVCYSPEGDMVAIGMKNGEFIILLVSSLKIWGKKRDRRCAIHDIRFSPDSRYLAVGSSENSVDFYDLTLGPTLNRISYCKDIPSFVIQMDFSADSRHLQVSSGCYKRHVYEVPSGKHLVDHAAIDRITWATWTSILGDEVMGIWSRHAEKADVTCACVSHSGISLVTGDDFGMVKLYDFPCPEKFAKHKRFLGHSPHVTNIRFTSGDRHVVSAGGDDCSVFVWKCVHTPH.

WD repeat units lie at residues 59-100, 104-145, 148-187, 195-233, 235-273, 280-321, 323-362, 364-403, 406-445, 449-488, and 561-601; these read GHSD…TVSV, VHTH…MLSM, GHTDRIFDISWDLYQPNKLVSCGVKHIKFWSLCGNALTPK, GDLQTILCLACARDELTYSGALNGDIYVWKGINLIRTIQ, AHTAGIFSMNACEEGFATGGRDGCIRLWDLTFKPITVID, GYKG…LIMQ, HCEGELWALAVHPTKPLAVTGSDDRSVRIWSLVDHALIAR, NMDEPIRCAAVNADGVHLALGMKDGSLTVLRVRDMTEVVH, DRKEAIHELKYSPDGTYLAVGCNDSSVDIYGVAQRYKKVG, GSLSFITHLDWSSDSKYLQTNDGSGKRLLYKMPGGKEVTS, and GHSA…KLKD. Residues 609–629 are disordered; sequence ESLTESNSDESDSDLSDVPEL. Residues 615–629 are compositionally biased toward acidic residues; the sequence is NSDESDSDLSDVPEL. WD repeat units follow at residues 725-766, 770-811, 814-853, 861-900, 901-940, 996-1035, 1038-1077, 1080-1120, and 1236-1276; these read GHDD…PLSI, YHQY…KLSV, GSKDKIFVVKMNPYVPDKLITAGIKHMKFWRRAGGGLIGR, GKNDTMMCAVYGWTEEMAFSGTSTGDVCIWRDVFLVKTVK, AHDGPVFSMHALEKGFVTGGKDGVVALWDDSFERCLKTYA, HMEGEVWGLATHPYLPICATVSDDKTLRIWDLSPSHCMLA, KLKKGGRCCCFSPDGKALAVGLNDGSFLMANADTLEDLVS, HRKD…RVGV, and AHST…HREK. Disordered regions lie at residues 1274–1299 and 1323–1363; these read REKKNCDSEESDTDSEEDGGYDSDVT and PHLQ…NVGK. The span at 1281 to 1294 shows a compositional bias: acidic residues; the sequence is SEESDTDSEEDGGY. A compositionally biased stretch (basic and acidic residues) spans 1326 to 1337; sequence QQKEPSVDERQG. 10 WD repeats span residues 1420–1471, 1475–1516, 1519–1558, 1568–1606, 1608–1654, 1699–1739, 1741–1782, 1783–1822, 1895–1934, and 1940–1977; these read EHND…TLSI, SHSK…KIAS, GHNQRIFVAEFRPDSDTQFVSVGIKHVKFWTLAGRALLSK, ARMQTMLAVAFGANNLTFTGTISGDVCVWKDHILCRVVA, AHNG…RAFR, GHVD…MLNK, NLGH…GKKR, DRRCAIHDIRFSPDSRYLAVGSSENSVDFYDLTLGPTLNR, AEKADVTCACVSHSGISLVTGDDFGMVKLYDFPCPEKFAK, and GHSPHVTNIRFTSGDRHVVSAGGDDCSVFVWKCVHTPH.

It belongs to the WD repeat EMAP family. As to expression, highly expressed in brain, especially in hippocampus, cerebellum and olfactory bulb (at protein level).

The protein resides in the cytoplasm. The protein localises to the cytoskeleton. Its function is as follows. May modify the assembly dynamics of microtubules, such that microtubules are slightly longer, but more dynamic. This chain is Echinoderm microtubule-associated protein-like 5 (Eml5), found in Rattus norvegicus (Rat).